The chain runs to 298 residues: MAIPVTRMMVPHAIPSLRLSHPNPSRVDFLCRCAPSEIQPLRPELSLSVGIHAIPHPDKVEKGGEDAFFVSSYRGGVMAVADGVSGWAEQDVDPSLFSKELMANASRLVDDQEVRYDPGFLIDKAHTATTSRGSATIILAMLEEVGILKIGNVGDCGLKLLREGQIIFATAPQEHYFDCPYQLSSEGSAQTYLDASFSIVEVQKGDVIVMGSDGLFDNVFDHEIVSIVTKHTDVAESSRLLAEVASSHSRDTEFESPYALEARAKGFDVPLWKKVLGKKLTGGKLDDVTVIVAKVVSS.

The 248-residue stretch at 48 to 295 (SVGIHAIPHP…DDVTVIVAKV (248 aa)) folds into the PPM-type phosphatase domain. Mn(2+) is bound by residues Asp-82, Gly-83, Asp-213, and Asp-286.

It belongs to the PP2C family. The cofactor is Mg(2+). It depends on Mn(2+) as a cofactor.

It carries out the reaction O-phospho-L-seryl-[protein] + H2O = L-seryl-[protein] + phosphate. The catalysed reaction is O-phospho-L-threonyl-[protein] + H2O = L-threonyl-[protein] + phosphate. This Arabidopsis thaliana (Mouse-ear cress) protein is Probable protein phosphatase 2C 26.